The following is a 178-amino-acid chain: Crossover junction endodeoxyribonuclease RuvC (178 aa).

Residues Asp11, Glu71, and Asp143 contribute to the active site. Residues Asp11, Glu71, and Asp143 each coordinate Mg(2+).

Belongs to the RuvC family. In terms of assembly, homodimer which binds Holliday junction (HJ) DNA. The HJ becomes 2-fold symmetrical on binding to RuvC with unstacked arms; it has a different conformation from HJ DNA in complex with RuvA. In the full resolvosome a probable DNA-RuvA(4)-RuvB(12)-RuvC(2) complex forms which resolves the HJ. The cofactor is Mg(2+).

It localises to the cytoplasm. The enzyme catalyses Endonucleolytic cleavage at a junction such as a reciprocal single-stranded crossover between two homologous DNA duplexes (Holliday junction).. In terms of biological role, the RuvA-RuvB-RuvC complex processes Holliday junction (HJ) DNA during genetic recombination and DNA repair. Endonuclease that resolves HJ intermediates. Cleaves cruciform DNA by making single-stranded nicks across the HJ at symmetrical positions within the homologous arms, yielding a 5'-phosphate and a 3'-hydroxyl group; requires a central core of homology in the junction. The consensus cleavage sequence is 5'-(A/T)TT(C/G)-3'. Cleavage occurs on the 3'-side of the TT dinucleotide at the point of strand exchange. HJ branch migration catalyzed by RuvA-RuvB allows RuvC to scan DNA until it finds its consensus sequence, where it cleaves and resolves the cruciform DNA. This is Crossover junction endodeoxyribonuclease RuvC from Neisseria meningitidis serogroup B (strain ATCC BAA-335 / MC58).